A 430-amino-acid chain; its full sequence is Glutamate-1-semialdehyde 2,1-aminomutase (430 aa).

Position 265 is an N6-(pyridoxal phosphate)lysine (Lys-265).

The protein belongs to the class-III pyridoxal-phosphate-dependent aminotransferase family. HemL subfamily. Homodimer. It depends on pyridoxal 5'-phosphate as a cofactor.

It is found in the cytoplasm. The enzyme catalyses (S)-4-amino-5-oxopentanoate = 5-aminolevulinate. Its pathway is porphyrin-containing compound metabolism; protoporphyrin-IX biosynthesis; 5-aminolevulinate from L-glutamyl-tRNA(Glu): step 2/2. The polypeptide is Glutamate-1-semialdehyde 2,1-aminomutase (hemL) (Helicobacter pylori (strain J99 / ATCC 700824) (Campylobacter pylori J99)).